Here is a 1663-residue protein sequence, read N- to C-terminus: Centrosomal protein of 152 kDa (1663 aa).

The disordered stretch occupies residues 1 to 60 (MSIDFDSGALQTQQEDEEYDKEDYAREQELQQLLTDLPHDMLDDSLSSSPEPSYSDCSGH). Positions 44–57 (DSLSSSPEPSYSDC) are enriched in low complexity. 7 coiled-coil regions span residues 266–516 (LQVL…ARLG), 571–664 (ELER…KHLL), 696–796 (QDKK…VTAK), 843–886 (SDCI…VEVA), 946–977 (DFTV…ALLK), 1014–1047 (RNKL…AERL), and 1182–1288 (VQQL…KNDM). Disordered regions lie at residues 1383 to 1408 (ETTQ…NQNI) and 1595 to 1628 (KRKD…SDVG). The span at 1603–1613 (RKYSNKIQEPS) shows a compositional bias: polar residues.

It belongs to the CEP152 family.

The protein resides in the cytoplasm. Its subcellular location is the cytoskeleton. It is found in the microtubule organizing center. It localises to the centrosome. The protein localises to the centriole. In terms of biological role, necessary for centrosome duplication; the function also seems to involve cep63, cdk5rap2 and wdr62 through a stepwise assembled complex at the centrosome that recruits cdk2 required for centriole duplication. Acts as a molecular scaffold facilitating the interaction of plk4 and cpap, 2 molecules involved in centriole formation. Also plays a key role in deuterosome-mediated centriole amplification in multiciliated that can generate more than 100 centrioles. Overexpression of cep152 can drive amplification of centrioles. The polypeptide is Centrosomal protein of 152 kDa (cep152) (Xenopus laevis (African clawed frog)).